The sequence spans 300 residues: MTEQETYCGFIAIVGRPNVGKSTLLNKILGQKISITSRKAQTTRHRIVGIHTEGVYQAVYVDTPGLHIEEKRAINRLMNRAASSAIGDVDLIIFVVDGTHWNDDDEMVLNKLRRAKAPVVLAINKVDNIKNKDELLPFITDVSQKLEFKEIIPISAQRGNNIHNLEKIVRTSLRKGVHHFPEDYVTDRSQRFMASEIIREKLMRFTGEELPYSVTVEIEQFKLNDRGIYEINGLILVEREGQKKMVIGAKGQKLKTIGTEARQDMERLFDNKVHLELWVKVKSGWADDERALRSLGYIDE.

The Era-type G domain occupies 7–182; the sequence is YCGFIAIVGR…LRKGVHHFPE (176 aa). The tract at residues 15-22 is G1; sequence GRPNVGKS. 15 to 22 is a binding site for GTP; the sequence is GRPNVGKS. The segment at 41-45 is G2; the sequence is QTTRH. The G3 stretch occupies residues 62-65; the sequence is DTPG. Residues 62–66 and 124–127 each bind GTP; these read DTPGL and NKVD. The segment at 124–127 is G4; the sequence is NKVD. The tract at residues 154–156 is G5; that stretch reads ISA. Residues 206-283 enclose the KH type-2 domain; sequence TGEELPYSVT…HLELWVKVKS (78 aa).

This sequence belongs to the TRAFAC class TrmE-Era-EngA-EngB-Septin-like GTPase superfamily. Era GTPase family. Monomer.

It is found in the cytoplasm. The protein resides in the cell inner membrane. An essential GTPase that binds both GDP and GTP, with rapid nucleotide exchange. Plays a role in 16S rRNA processing and 30S ribosomal subunit biogenesis and possibly also in cell cycle regulation and energy metabolism. The sequence is that of GTPase Era from Histophilus somni (strain 129Pt) (Haemophilus somnus).